A 752-amino-acid polypeptide reads, in one-letter code: MWNAQQDSDSAEALGRRQRWFCAGTLVLAFTGTFIIGFLFGWFIKPSNDSTSSVSYPGMKKAFLQELKAENIKKFLYNFTRTPHLAGTQHNFELAKQIHAQWKEFGLDLVELSDYDVLLSYPNKTHPNYISIINEDGNEIFKTSLAELSPPGYENISDVVPPYSAFSPQGTPEGDLVYVNYARTEDFFKLERVMKINCSGKIVIARYGQVFRGNKVKNAQLAGAKGIILYSDPADYFVPGVKSYPDGWNLPGGGVQRGNVLNLNGAGDPLTPGYPANEYAYRHEFTEAVGLPSIPVHPIGYDDAQKLLEHMGGSAPPDSSWKGGLKVPYNVGPGFAGNFSKQKVKLHIHSYNKVTRIYNVIGTLKGAVEPDRYVILGGHRDAWVFGGIDPQSGAAVVHEIVRTFGTLKKKGWRPRRTILFASWDAEEFGLLGSTEWAEEHSRLLQERGVAYINADSSIEGNYTLRVDCTPLMHSLVYNLTKELPSPDEGFEGKSLYDSWKEKSPSTEFIGMPRISKLGSGNDFEVFFQRLGIASGRARYTKNWKNNKVSSYPLYHSVYETYELVEKFYDPTFKYHLTVAQVRGAMVFELANSIVLPFDCQSYAVALKKHAETIYNISMNHPQEMKAYMISFDSLFSAVNNFTDVASKFNQRLQDLDKSNPILLRILNDQLMYLERAFIDPLGLPGRPFYRHIIYAPSSHNKYAGESFPGIYDALFDINNKVDTSKAWREVKRQISIAAFTVQAAAETLREVD.

Residues 1–19 lie on the Cytoplasmic side of the membrane; it reads MWNAQQDSDSAEALGRRQR. Residue S10 is modified to Phosphoserine. A helical; Signal-anchor for type II membrane protein membrane pass occupies residues 20–44; that stretch reads WFCAGTLVLAFTGTFIIGFLFGWFI. Residues 45–752 are Extracellular-facing; that stretch reads KPSNDSTSSV…AAAETLREVD (708 aa). N48, N78, N123, N155, and N197 each carry an N-linked (GlcNAc...) asparagine glycan. R212 and N259 together coordinate substrate. Positions 271 and 274 each coordinate Ca(2+). An NAALADase region spans residues 276–589; that stretch reads ANEYAYRHEF…QVRGAMVFEL (314 aa). N338 carries N-linked (GlcNAc...) asparagine glycosylation. H379 and D389 together coordinate Zn(2+). E426 is a substrate binding site. E426 functions as the Nucleophile; for NAALADase activity in the catalytic mechanism. E427 is a binding site for Zn(2+). Positions 435 and 438 each coordinate Ca(2+). D455 contacts Zn(2+). 2 N-linked (GlcNAc...) asparagine glycosylation sites follow: N461 and N478. Substrate is bound by residues 519–520, N521, 536–538, Y554, and 554–555; these read SG, RAR, and YH. H555 contributes to the Zn(2+) binding site. N-linked (GlcNAc...) asparagine glycosylation is present at N615. Catalysis depends on S630, which acts as the Charge relay system. N640 carries N-linked (GlcNAc...) asparagine glycosylation. Residues D668 and H691 each act as charge relay system in the active site. 701–702 contacts substrate; sequence KY.

The protein belongs to the peptidase M28 family. M28B subfamily. In terms of assembly, homodimer. Zn(2+) serves as cofactor. Widely expressed throughout brain regions with highest levels in the hippocampus, dentate gyrus, priform cortex, choroid plexus of ventricles, pineal gland, anterior lobe of the pituitary gland and supraoptic nucleus. High levels also found in the cerebral cortex, substantia nigra, pontine nucleus and the granule cell layer of cerebellum. Highly expressed in astrocytes and non-myelinating Schwann cells. Also expressed in kidney, localizing to the proximal brush border of the renal tube.

It localises to the cell membrane. The enzyme catalyses Release of an unsubstituted, C-terminal glutamyl residue, typically from Ac-Asp-Glu or folylpoly-gamma-glutamates.. Its activity is regulated as follows. The NAALADase activity is inhibited by beta-NAAG, quisqualic acid and 2-(phosphonomethyl)glutaric acid (PMG). Its function is as follows. Has both folate hydrolase and N-acetylated-alpha-linked-acidic dipeptidase (NAALADase) activity. Has a preference for tri-alpha-glutamate peptides. In the intestine, required for the uptake of folate. In the brain, modulates excitatory neurotransmission through the hydrolysis of the neuropeptide, N-aceylaspartylglutamate (NAAG), thereby releasing glutamate. In terms of biological role, also exhibits a dipeptidyl-peptidase IV type activity. In vitro, cleaves Gly-Pro-AMC. The polypeptide is Glutamate carboxypeptidase 2 (Folh1) (Rattus norvegicus (Rat)).